The chain runs to 381 residues: Dual-specificity RNA methyltransferase RlmN (381 aa).

Catalysis depends on Glu-96, which acts as the Proton acceptor. The Radical SAM core domain occupies 102-342 (TDDRGTLCVS…TRTTRGDDID (241 aa)). A disulfide bridge links Cys-109 with Cys-345. Residues Cys-116, Cys-120, and Cys-123 each coordinate [4Fe-4S] cluster. Residues 170–171 (GE), Ser-202, 224–226 (SLH), and Asn-302 contribute to the S-adenosyl-L-methionine site. Cys-345 (S-methylcysteine intermediate) is an active-site residue.

It belongs to the radical SAM superfamily. RlmN family. The cofactor is [4Fe-4S] cluster.

It is found in the cytoplasm. It catalyses the reaction adenosine(2503) in 23S rRNA + 2 reduced [2Fe-2S]-[ferredoxin] + 2 S-adenosyl-L-methionine = 2-methyladenosine(2503) in 23S rRNA + 5'-deoxyadenosine + L-methionine + 2 oxidized [2Fe-2S]-[ferredoxin] + S-adenosyl-L-homocysteine. The enzyme catalyses adenosine(37) in tRNA + 2 reduced [2Fe-2S]-[ferredoxin] + 2 S-adenosyl-L-methionine = 2-methyladenosine(37) in tRNA + 5'-deoxyadenosine + L-methionine + 2 oxidized [2Fe-2S]-[ferredoxin] + S-adenosyl-L-homocysteine. Its function is as follows. Specifically methylates position 2 of adenine 2503 in 23S rRNA and position 2 of adenine 37 in tRNAs. m2A2503 modification seems to play a crucial role in the proofreading step occurring at the peptidyl transferase center and thus would serve to optimize ribosomal fidelity. This chain is Dual-specificity RNA methyltransferase RlmN, found in Pseudomonas putida (strain ATCC 700007 / DSM 6899 / JCM 31910 / BCRC 17059 / LMG 24140 / F1).